We begin with the raw amino-acid sequence, 910 residues long: MSTKVKKCREPARVTLPAPEEEEDGEAEGGESQRRRRGWRGVNGGLEPPCPRAPPSPGPDASSEGSPSRWRTAGMRDKGRRQAVRGPAFMFGARGPSLTAEEERFLDAAEYGNIPVVRKMLEESRTLNVNCVDYMGQNALQLAVGNEHLEVTELLLKKENLARIGDALLLAISKGYVRIVEAILGHPGFAASRRLTLSPCEQELRDDDFYAYDEDGTRFSPDITPIILAAHCHKYEVVHLLLLKGARIERPHDYFCRCSDCAEKQRLDAFSHSRSRINAYKGLASPAYLSLSSEDPVLTALELSNELAKLANIEKEFKNDYRKLSMQCKDFVVGVLDLCRDSEEVEAILNGDLESAEPLERHGHKASLSRVKLAIKYEVKKFVAHPNCQQQLLTIWYENLSGLREQTIAIKCLVVLVVALGLPFLAIGYWIAPCSRLGKILRSPFMKFVAHAASFIIFLGLLVFNASDRFEGITTLPNITVIDYPKQIFRVKTTQFTWTEMLIMVWVLGMMWSECKELWLEGPREYIVQLWNVLDFGMLSIFIAAFTARFLAFLQATKAQQYVDSHVQESDLSEVTLPPEVQYFTYARDKWLPSDPQIISEGLYAIAVVLSFSRIAYILPANESFGPLQISLGRTVKDIFKFMVLFIMVFLAFMIGMFILYSYYLGAKVNPAFTTVEESFKTLFWSIFGLSEVTSVVLKYDHKFIENIGYVLYGIYNVTMVVVLLNMLIAMINSSYQEIEDDSDVEWKFARSKLWLSYFDDGKTLPPPFSLVPSPKSFVYFIMRITNFSKCRRRRLQKDLELGMGNSKSRLNLFTQSNSRVFESHSFNSILNQPTRYQQIMKRLIKRYVLKAQVDKENDEVNEGELKEIKQDISSLRYELLEDKSQATEELAILIHKLSEKLNPSVLRCE.

Residues Met-1 to Ala-93 form a disordered region. Residues Met-1 to Phe-448 are Cytoplasmic-facing. The span at Pro-19–Gly-29 shows a compositional bias: acidic residues. Over residues Pro-48 to Gly-58 the composition is skewed to pro residues. The segment covering Pro-59–Ser-68 has biased composition (low complexity). ANK repeat units lie at residues Ala-100–Val-129, Met-135–Ile-164, Asp-166–Ser-192, and Pro-221–Arg-250. A Ca(2+)-binding site is contributed by Glu-147. The helical transmembrane segment at Val-449–Ala-466 threads the bilayer. The Extracellular segment spans residues Ser-467–Thr-497. Residue Asn-478 is glycosylated (N-linked (GlcNAc...) asparagine). The helical transmembrane segment at Trp-498–Lys-516 threads the bilayer. Residues Glu-514, Glu-517, and Asn-532 each contribute to the Ca(2+) site. At Glu-517–Gln-529 the chain is on the cytoplasmic side. The chain crosses the membrane as a helical span at residues Leu-530–Leu-551. Residues Ala-552–Asp-595 are Extracellular-facing. The chain crosses the membrane as a helical span at residues Pro-596 to Leu-619. At Pro-620–Asp-638 the chain is on the cytoplasmic side. The ANK 5 repeat unit spans residues Glu-623–Ala-652. Residues Ile-639–Ser-662 traverse the membrane as a helical segment. The Extracellular portion of the chain corresponds to Tyr-663–His-702. Residues Lys-703–Leu-728 traverse the membrane as a helical segment. At Ile-729–Glu-910 the chain is on the cytoplasmic side. Ca(2+) is bound by residues Glu-860, Glu-863, Glu-865, and Asp-872.

This sequence belongs to the transient receptor (TC 1.A.4) family. STrpC subfamily. TRPC3 sub-subfamily. As to quaternary structure, homotetramer. Interacts with ITPR1, ITPR3, MX1 and RNF24. Interacts with JPH2; the interaction is involved in maintaining Ca(2+) homeostasis in skeletal muscle and is mediated by JPH2 'Ser-165' phosphorylation. As to expression, abundantly expressed in brain. Concentrated in cerebellar Purkinje cells and sparsely localized in cerebellar granule lyer, pontine nuclei and thalamus. Lower levels detected in other tissues.

The protein localises to the cell membrane. It carries out the reaction Ca(2+)(in) = Ca(2+)(out). With respect to regulation, activated by diacylglycerol (DAG) in a membrane-delimited fashion, independently of protein kinase C. Activated by inositol 1,4,5-triphosphate receptors (ITPR) with bound IP3. May be activated by internal calcium store depletion. Inhibited by intracellular Ca(2+). Functionally, forms a receptor-activated non-selective calcium permeant cation channel. May be operated by a phosphatidylinositol second messenger system activated by receptor tyrosine kinases or G-protein coupled receptors. This Mus musculus (Mouse) protein is Short transient receptor potential channel 3 (Trpc3).